The primary structure comprises 85 residues: RDS3 complex subunit 10 (85 aa).

In terms of assembly, belongs to the SF3b complex composed of CUS1, HSH49, HSH155, RCP1, RDS3 and RSE1.

The protein resides in the nucleus. Involved in pre-mRNA splicing. Required for the SF3b integrity and prespliceosome assembly. This Saccharomyces cerevisiae (strain ATCC 204508 / S288c) (Baker's yeast) protein is RDS3 complex subunit 10 (YSF3).